The sequence spans 601 residues: Deuterosome assembly protein 1 (601 aa).

3 coiled-coil regions span residues 14–59, 86–196, and 226–277; these read CEAE…NAQT, TQNY…GKKQ, and IEKL…ELQS. The disordered stretch occupies residues 305 to 329; that stretch reads AQDNRKRVESSYSPSPKEAERKRKE. A coiled-coil region spans residues 354–397; the sequence is EEGLCSEQERLRSEISELTQELHQKEVTIATVMKKAALLERQLK. Residue serine 544 is modified to Phosphoserine. Positions 555-586 form a coiled coil; sequence AAQHFLMEEERRAKELEKLLNTHIDELQRHTE.

It belongs to the CEP63 family. As to quaternary structure, interacts with CEP152; the interaction is mutually exclusive with CEP63. As to expression, highly enriched in multicilia-abundant tissues (trachea and oviduct).

The protein localises to the cytoplasm. Functionally, key structural component of the deuterosome, a structure that promotes de novo centriole amplification in multiciliated cells. Deuterosome-mediated centriole amplification occurs in terminally differentiated multiciliated cells and can generate more than 100 centrioles. Probably sufficient for the specification and formation of the deuterosome inner core. Interacts with CEP152 and recruits PLK4 to activate centriole biogenesis. This is Deuterosome assembly protein 1 from Mus musculus (Mouse).